Here is a 192-residue protein sequence, read N- to C-terminus: Ciliary microtubule inner protein 3 (192 aa).

Residues 24-108 (RAGAEGGPSL…SGQKVKAPHR (85 aa)) are disordered. Basic residues predominate over residues 55 to 64 (APRRPPRPRT).

The protein belongs to the CIMIP3-like family. In terms of tissue distribution, detected in the sperm flagellum (at protein level).

It is found in the cytoplasm. Its subcellular location is the cytoskeleton. The protein resides in the flagellum axoneme. This is Ciliary microtubule inner protein 3 from Bos taurus (Bovine).